Here is a 418-residue protein sequence, read N- to C-terminus: Magnesium-chelatase subunit ChlI-2, chloroplastic (418 aa).

The transit peptide at 1–55 directs the protein to the chloroplast; the sequence is MASLLGRSPSSILTCPRISSPSSTSSMSHLCFGPEKLSGRIQFNPKKNRSRYHVS. Valine 56 carries the post-translational modification N-acetylvaline. 2 disulfides stabilise this stretch: cysteine 96-cysteine 187 and cysteine 348-cysteine 390. An ATP-binding site is contributed by 113 to 120; it reads GDRGTGKS.

Belongs to the Mg-chelatase subunits D/I family. The magnesium chelatase complex is a heterotrimer consisting of subunits CHLI, CHLD and CHLH. As to expression, expressed in leaves.

Its subcellular location is the plastid. The protein resides in the chloroplast. The enzyme catalyses protoporphyrin IX + Mg(2+) + ATP + H2O = Mg-protoporphyrin IX + ADP + phosphate + 3 H(+). The protein operates within porphyrin-containing compound metabolism; chlorophyll biosynthesis. Its activity is regulated as follows. Redox regulation; active in reducing conditions, inactive in oxidizing conditions. Thioredoxins f and m mediate the reversible reductive activation of oxidized CHLI2. Its function is as follows. Involved in chlorophyll biosynthesis. Catalyzes the insertion of magnesium ion into protoporphyrin IX to yield Mg-protoporphyrin IX. The reaction takes place in two steps, with an ATP-dependent activation followed by an ATP-dependent chelation step. Possesses low affinity for ATP and may play a limited role in chlorophyll biosynthesis, and contributes to the assembly of the Mg-chelatase complex. The protein is Magnesium-chelatase subunit ChlI-2, chloroplastic (CHLI2) of Arabidopsis thaliana (Mouse-ear cress).